The following is a 239-amino-acid chain: Phosducin-like protein 3 (239 aa).

Met1 bears the N-acetylmethionine mark. A Phosducin domain is found at 32-180 (EAEEEQRILQ…EGDIKAQFIG (149 aa)). A phosphoserine mark is found at Ser43, Ser234, and Ser236. The segment at 91 to 239 (FGEVLEISGK…MKRDSDSEGD (149 aa)) is thioredoxin fold.

Belongs to the phosducin family. In terms of assembly, interacts (via thioredoxin fold region) with KDR/VEGFR2 (via juxtamembrane domain). Forms ternary complexes with the chaperonin CCT complex and actin substrate, leading to inhibition of actin folding. Interacts with XIAP (via BIR 3 and RING domain). Interacts with HSP90AA1 and HSP90AB1. N-terminal methionine acetylation destabilizes the protein.

It is found in the cytoplasm. The protein localises to the perinuclear region. It localises to the endoplasmic reticulum. Acts as a chaperone for the angiogenic VEGF receptor KDR/VEGFR2, increasing its abundance by inhibiting its ubiquitination and degradation. Inhibits the folding activity of the chaperonin-containing T-complex (CCT) which leads to inhibition of cytoskeletal actin folding. Acts as a chaperone during heat shock alongside HSP90 and HSP40/70 chaperone complexes. Modulates the activation of caspases during apoptosis. The sequence is that of Phosducin-like protein 3 (PDCL3) from Pongo abelii (Sumatran orangutan).